The following is a 314-amino-acid chain: 4-hydroxyproline 2-epimerase (314 aa).

Catalysis depends on Cys88, which acts as the Proton acceptor. Substrate-binding positions include 89–90 (GH), His208, and Asp232. Cys236 (proton donor) is an active-site residue. 237–238 (GT) contributes to the substrate binding site.

It belongs to the proline racemase family. As to quaternary structure, homodimer.

It catalyses the reaction trans-4-hydroxy-L-proline = cis-4-hydroxy-D-proline. With respect to regulation, inhibited by iodoacetate, iodoacetamide and by high amounts (10 mM) of pyrrole-2-carboxylate (PYC). Not inhibited by PYC at 1 mM. In terms of biological role, allows intracellular utilization of 4-hydroxyproline, one of the major constituents of host collagen, by converting trans-4-hydroxy-L-proline (t4LHyp) to cis-4-hydroxy-D-proline (c4DHyp), which can be further metabolized by intracellular 4-hydroxy-D-proline oxidases. Strong B-cell mitogen. Plays an important role in the regulation of intra- and extracellular amino acid pools, allowing the bacterium to profit from host precursors and enzymatic pathways. Cannot use L-proline, trans-3-hydroxy-L-proline (t3LHyp) and pyrrolidone-5-carboxylate (P5C) as substrate. The chain is 4-hydroxyproline 2-epimerase from Pseudomonas aeruginosa (strain ATCC 15692 / DSM 22644 / CIP 104116 / JCM 14847 / LMG 12228 / 1C / PRS 101 / PAO1).